The sequence spans 371 residues: Cuticle collagen 71 (371 aa).

Residues 38 to 60 (GYAAVTFSTVSVICFCVTMPVVF) form a helical membrane-spanning segment. Disordered regions lie at residues 108–127 (AGYD…GGDA) and 153–371 (EGPH…GTRR). The segment covering 174–186 (PGPPGPPGPPGRP) has biased composition (pro residues). Over residues 188–201 (PNGKAGANGLNGNP) the composition is skewed to low complexity. Residues 202 to 222 (GRPPEAPCEPVTPPPCPPCPA) show a composition bias toward pro residues. A compositionally biased stretch (low complexity) spans 223-240 (GPKGAPGQAGYPGADGQP). Residues 223 to 280 (GPKGAPGQAGYPGADGQPGSQGDNGEKGSDGAAGEKGRPGPLGKIGEPGATGETGENA) enclose the Collagen-like domain. Basic and acidic residues predominate over residues 246 to 260 (NGEKGSDGAAGEKGR). Low complexity predominate over residues 314 to 323 (AGAPGAPGEN). Basic and acidic residues predominate over residues 340-349 (HDGKAGRAGE).

This sequence belongs to the cuticular collagen family. In terms of assembly, collagen polypeptide chains are complexed within the cuticle by disulfide bonds and other types of covalent cross-links.

It is found in the membrane. The protein localises to the nucleus. Probable cuticular collagen-like protein. Nematode cuticles are composed largely of collagen-like proteins. The cuticle functions both as an exoskeleton and as a barrier to protect the worm from its environment. Acts downstream of the Wnt signaling pathway, perhaps in the formation of the adult cuticle. The protein is Cuticle collagen 71 of Caenorhabditis elegans.